Reading from the N-terminus, the 331-residue chain is Probable tRNA pseudouridine synthase B (331 aa).

The Nucleophile role is filled by aspartate 66. Positions 233–307 constitute a PUA domain; sequence INKIIVKDSA…NEEDNREKYK (75 aa).

It belongs to the pseudouridine synthase TruB family. Type 2 subfamily.

The catalysed reaction is uridine(55) in tRNA = pseudouridine(55) in tRNA. Could be responsible for synthesis of pseudouridine from uracil-55 in the psi GC loop of transfer RNAs. The sequence is that of Probable tRNA pseudouridine synthase B from Methanococcus aeolicus (strain ATCC BAA-1280 / DSM 17508 / OCM 812 / Nankai-3).